Consider the following 320-residue polypeptide: Cytochrome f (320 aa).

Residues 1–35 (MQTRNTFSWIREEITRSISVLLMIYIITWASISSA) form the signal peptide. Positions 36, 56, 59, and 60 each coordinate heme. A helical transmembrane segment spans residues 286 to 306 (VQGLLFFLGSVVLAQIFLVLK).

Belongs to the cytochrome f family. The 4 large subunits of the cytochrome b6-f complex are cytochrome b6, subunit IV (17 kDa polypeptide, petD), cytochrome f and the Rieske protein, while the 4 small subunits are PetG, PetL, PetM and PetN. The complex functions as a dimer. Heme is required as a cofactor.

The protein localises to the plastid. It is found in the chloroplast thylakoid membrane. Functionally, component of the cytochrome b6-f complex, which mediates electron transfer between photosystem II (PSII) and photosystem I (PSI), cyclic electron flow around PSI, and state transitions. The chain is Cytochrome f from Lobularia maritima (Sweet alyssum).